We begin with the raw amino-acid sequence, 84 residues long: Putative membrane protein insertion efficiency factor (84 aa).

Belongs to the UPF0161 family.

It is found in the cell membrane. Its function is as follows. Could be involved in insertion of integral membrane proteins into the membrane. This chain is Putative membrane protein insertion efficiency factor, found in Staphylococcus carnosus (strain TM300).